The chain runs to 166 residues: Phospholipase A2 inhibitor (166 aa).

A signal peptide spans 1 to 19 (MRLILLSGLLLLGIFLANG). The 116-residue stretch at 46-161 (LKGSFLIVHK…CDDNLLVVCE (116 aa)) folds into the C-type lectin domain. Cystine bridges form between Cys83–Cys160 and Cys138–Cys152. Asn122 carries an N-linked (GlcNAc...) asparagine glycan.

This sequence belongs to the alpha-type phospholipase A2 inhibitor family. In terms of assembly, homotrimer; non-covalently linked. Expressed by the liver.

It localises to the secreted. In terms of biological role, this phospholipase A2 inhibitor binds directly phospholipase A2 in the presence or absence of calcium. This is Phospholipase A2 inhibitor from Bothrops jararacussu (Jararacussu).